The primary structure comprises 21 residues: uncharacterized protein (21 aa).

This is an uncharacterized protein from Methanococcus voltae.